Here is a 198-residue protein sequence, read N- to C-terminus: Cytokinin riboside 5'-monophosphate phosphoribohydrolase (198 aa).

Substrate is bound by residues E91, 109-110 (RK), 126-132 (GVGTAEE), and T138.

Belongs to the LOG family.

It catalyses the reaction N(6)-(dimethylallyl)adenosine 5'-phosphate + H2O = N(6)-dimethylallyladenine + D-ribose 5-phosphate. The enzyme catalyses 9-ribosyl-trans-zeatin 5'-phosphate + H2O = trans-zeatin + D-ribose 5-phosphate. Functionally, catalyzes the hydrolytic removal of ribose 5'-monophosphate from nitrogen N6-modified adenosines, the final step of bioactive cytokinin synthesis. This Rhodococcoides fascians (Rhodococcus fascians) protein is Cytokinin riboside 5'-monophosphate phosphoribohydrolase (fas6).